Reading from the N-terminus, the 196-residue chain is Protein TEX261 (196 aa).

A run of 5 helical transmembrane segments spans residues 3–23 (FMYL…TLAV), 42–62 (SRII…LYVF), 70–90 (IGVG…FPFI), 97–117 (FILS…FFAE), and 125–145 (VLAY…VSLS).

Belongs to the SVP26 family.

It is found in the membrane. This is Protein TEX261 (TEX261) from Homo sapiens (Human).